A 119-amino-acid chain; its full sequence is Large ribosomal subunit protein uL22 (119 aa).

The protein belongs to the universal ribosomal protein uL22 family. As to quaternary structure, part of the 50S ribosomal subunit.

Functionally, this protein binds specifically to 23S rRNA; its binding is stimulated by other ribosomal proteins, e.g. L4, L17, and L20. It is important during the early stages of 50S assembly. It makes multiple contacts with different domains of the 23S rRNA in the assembled 50S subunit and ribosome. The globular domain of the protein is located near the polypeptide exit tunnel on the outside of the subunit, while an extended beta-hairpin is found that lines the wall of the exit tunnel in the center of the 70S ribosome. The chain is Large ribosomal subunit protein uL22 from Rickettsia rickettsii (strain Iowa).